The chain runs to 73 residues: Large ribosomal subunit protein bL31 (73 aa).

It belongs to the bacterial ribosomal protein bL31 family. Type A subfamily. As to quaternary structure, part of the 50S ribosomal subunit.

Its function is as follows. Binds the 23S rRNA. The chain is Large ribosomal subunit protein bL31 from Chelativorans sp. (strain BNC1).